The sequence spans 656 residues: MSNSQSIKIKKPRSNENFASGSYSSRRSQQIHRLSHSPMAEGFHKPKLNISPSESNLPNNVAENTTDTPVNYGSIRDENHNSRKGKDVTLNSDEAHSENVPSTSEDPDVVRRHLGGQAADDDNFSSLQLQGGDMHRQVYRWQQEVDQNKQIRRGRSRSFSAKVSDPNLHLRSVQDMKQAGGMRRDFLRNRASSISMSSNAHGNPNFLNRNFIEFLSVYGHFAGEELSEEDEDEDTDDFAMPRDVNPSLIHSTVPSEQEPLISRHGRYKLQTPGNASNGKAVLLLLKSFVGTGVLFLPKAFKLGGLVFSSATLLIVGVLSHICFLLLIQTRMKVPGSFGDIGGTLYGPHMRFAILASIVVSQIGFSSAYISFVASTLQACVKVISTTHREYHLAVFIFIQFLVFVPLSLVRKISKLSATALIADVFILLGILYLYFWDVITLATKGIADVAMFNKTDFSLFIGVAIFTYEGICLILPIQEQMAKPKNLPKLLTGVMAAISLLFISIGLLSYAAFGSKVKTVVILNMPESTFTVIIQFLYAIAILLSTPLQLFPAIAIIEQGIFTRSGKRNRKIKWRKNYLRVLIVILAILISWAGSSRLDLFVSMVGSVCCIPLIYMYPPMLHYKACANNWILRTLDIFMFTIGAFAMAFTTYMTFF.

The tract at residues 1–109 (MSNSQSIKIK…VPSTSEDPDV (109 aa)) is disordered. Residues 15–28 (NENFASGSYSSRRS) show a composition bias toward polar residues. Ser37 and Ser53 each carry phosphoserine. The segment covering 50 to 71 (ISPSESNLPNNVAENTTDTPVN) has biased composition (polar residues). Positions 75 to 97 (IRDENHNSRKGKDVTLNSDEAHS) are enriched in basic and acidic residues. A Phosphoserine modification is found at Ser172. 11 consecutive transmembrane segments (helical) span residues 280–300 (AVLLLLKSFVGTGVLFLPKAF), 307–327 (FSSATLLIVGVLSHICFLLLI), 351–371 (FAILASIVVSQIGFSSAYISF), 389–409 (EYHLAVFIFIQFLVFVPLSLV), 419–439 (ALIADVFILLGILYLYFWDVI), 457–477 (FSLFIGVAIFTYEGICLILPI), 494–514 (VMAAISLLFISIGLLSYAAFG), 537–557 (LYAIAILLSTPLQLFPAIAII), 578–598 (YLRVLIVILAILISWAGSSRL), 601–621 (FVSMVGSVCCIPLIYMYPPML), and 636–656 (DIFMFTIGAFAMAFTTYMTFF).

This sequence belongs to the amino acid/polyamine transporter 2 family.

Its subcellular location is the endoplasmic reticulum membrane. It is found in the vacuole membrane. Its function is as follows. Involved in amino acid efflux from the vacuole to the cytoplasm. Capable of transporting large neutral amino acids including tyrosine, glutamine, asparagine, isoleucine and leucine. Required for spore formation. The sequence is that of Vacuolar amino acid transporter 3 (avt3) from Schizosaccharomyces pombe (strain 972 / ATCC 24843) (Fission yeast).